Reading from the N-terminus, the 313-residue chain is Porphobilinogen deaminase (313 aa).

Cysteine 242 carries the post-translational modification S-(dipyrrolylmethanemethyl)cysteine.

Belongs to the HMBS family. As to quaternary structure, monomer. It depends on dipyrromethane as a cofactor.

It carries out the reaction 4 porphobilinogen + H2O = hydroxymethylbilane + 4 NH4(+). It functions in the pathway porphyrin-containing compound metabolism; protoporphyrin-IX biosynthesis; coproporphyrinogen-III from 5-aminolevulinate: step 2/4. Tetrapolymerization of the monopyrrole PBG into the hydroxymethylbilane pre-uroporphyrinogen in several discrete steps. This chain is Porphobilinogen deaminase, found in Pseudomonas fluorescens (strain SBW25).